Here is a 67-residue protein sequence, read N- to C-terminus: Phycobilisome 7.8 kDa linker polypeptide, allophycocyanin-associated, core (67 aa).

Positions 1–56 constitute a CpcD-like domain; it reads MRMFRITACVPSQTRIRTQRELQNTYFTKLVPYDNSFREQQRIMKMGGKIVKVELA.

The protein belongs to the phycobilisome linker protein family.

Its subcellular location is the cellular thylakoid membrane. Functionally, rod linker protein, associated with allophycocyanin. Linker polypeptides determine the state of aggregation and the location of the disk-shaped phycobiliprotein units within the phycobilisome and modulate their spectroscopic properties in order to mediate a directed and optimal energy transfer. This chain is Phycobilisome 7.8 kDa linker polypeptide, allophycocyanin-associated, core (apcC), found in Synechocystis sp. (strain ATCC 27184 / PCC 6803 / Kazusa).